The following is a 272-amino-acid chain: MLALIYSARDPAGSGTARIIRELLGGDRCSLPRAVECTLLSNGVYLVGFDADSIFLDFLGEVLPANIEGYVVLSRHSGGKPSLTVHHTGNPGPEAPYGGKPWSLAPAWPRTAAGLLRTYRRVAEEMGLTGEFQVTLEATHHGPTELEKPIVFIEIGSSEREWVRRDTQNAMAETVIRFMERDLVSVECSKVAIGIGDTHYPIKHTRNVLERGYCYSHIFSKHVLDNLTLELLEQALEKTRDKVDTVVLAKVPSRVKQLARSFAEKYGLQLEK.

This sequence belongs to the DtdA deacylase family. In terms of assembly, monomer. It depends on Zn(2+) as a cofactor.

The enzyme catalyses a D-aminoacyl-tRNA + H2O = a tRNA + a D-alpha-amino acid + H(+). The catalysed reaction is glycyl-tRNA(Ala) + H2O = tRNA(Ala) + glycine + H(+). D-aminoacyl-tRNA deacylase with broad substrate specificity. By recycling D-aminoacyl-tRNA to D-amino acids and free tRNA molecules, this enzyme counteracts the toxicity associated with the formation of D-aminoacyl-tRNA entities in vivo. This chain is D-aminoacyl-tRNA deacylase, found in Hyperthermus butylicus (strain DSM 5456 / JCM 9403 / PLM1-5).